The sequence spans 296 residues: Ribosomal RNA small subunit methyltransferase A (296 aa).

The S-adenosyl-L-methionine site is built by asparagine 32, leucine 34, glycine 59, glutamate 80, aspartate 105, and asparagine 130.

It belongs to the class I-like SAM-binding methyltransferase superfamily. rRNA adenine N(6)-methyltransferase family. RsmA subfamily.

The protein resides in the cytoplasm. It carries out the reaction adenosine(1518)/adenosine(1519) in 16S rRNA + 4 S-adenosyl-L-methionine = N(6)-dimethyladenosine(1518)/N(6)-dimethyladenosine(1519) in 16S rRNA + 4 S-adenosyl-L-homocysteine + 4 H(+). Specifically dimethylates two adjacent adenosines (A1518 and A1519) in the loop of a conserved hairpin near the 3'-end of 16S rRNA in the 30S particle. May play a critical role in biogenesis of 30S subunits. The polypeptide is Ribosomal RNA small subunit methyltransferase A (Levilactobacillus brevis (strain ATCC 367 / BCRC 12310 / CIP 105137 / JCM 1170 / LMG 11437 / NCIMB 947 / NCTC 947) (Lactobacillus brevis)).